The chain runs to 183 residues: MSPLLLWLGLMLCVSGLQAGDEEEHKCFLEGENLTLTCPYNIMLYSLSLKAWQRVRSHGSPETLVLTNTRKADFNVARAGKYLLEDYPTESVVKVTVTGLQRQDVGLYQCVVYLSPDNVIILRQRIRLAWCQGKPVMVIVLTCGFILNKGLVFSVLFVFLCKAGPKVLQPSKTSKVQGVSEKQ.

A signal peptide spans 1-19 (MSPLLLWLGLMLCVSGLQA). Residues 20 to 138 (GDEEEHKCFL…AWCQGKPVMV (119 aa)) are Extracellular-facing. Residues 30–128 (EGENLTLTCP…VIILRQRIRL (99 aa)) enclose the Ig-like V-type domain. N33 carries N-linked (GlcNAc...) asparagine glycosylation. A disulfide bond links C38 and C110. A helical transmembrane segment spans residues 139–159 (IVLTCGFILNKGLVFSVLFVF). Topologically, residues 160–183 (LCKAGPKVLQPSKTSKVQGVSEKQ) are cytoplasmic.

In terms of assembly, interacts with TYROBP/DAP12. Expressed in macrophages and in T-cells.

The protein resides in the cell membrane. Functionally, forms a receptor signaling complex with TYROBP/DAP12 which mediates activation of macrophages as part of the innate immune response. This chain is Triggering receptor expressed on myeloid cells 3, found in Mus musculus (Mouse).